The following is a 332-amino-acid chain: UPF0194 membrane protein YbhG (332 aa).

An N-terminal signal peptide occupies residues 1 to 16 (MMKKPVVIGLAVVVLA). The stretch at 108 to 209 (EEIAQAAAAV…LNLQDSTLIA (102 aa)) forms a coiled coil.

It belongs to the UPF0194 family.

The protein localises to the periplasm. The chain is UPF0194 membrane protein YbhG from Escherichia coli O45:K1 (strain S88 / ExPEC).